Here is a 686-residue protein sequence, read N- to C-terminus: Methionine--tRNA ligase (686 aa).

A 'HIGH' region motif is present at residues 15–25; the sequence is PYANGSIHLGH. C146, C149, C159, and C162 together coordinate Zn(2+). Residues 332–336 carry the 'KMSKS' region motif; the sequence is KMSKS. K335 provides a ligand contact to ATP. Positions 585–686 constitute a tRNA-binding domain; the sequence is AFAAVDMRIA…EGAQPGMRVM (102 aa).

Belongs to the class-I aminoacyl-tRNA synthetase family. MetG type 1 subfamily. In terms of assembly, homodimer. Zn(2+) serves as cofactor.

It localises to the cytoplasm. It catalyses the reaction tRNA(Met) + L-methionine + ATP = L-methionyl-tRNA(Met) + AMP + diphosphate. Is required not only for elongation of protein synthesis but also for the initiation of all mRNA translation through initiator tRNA(fMet) aminoacylation. The polypeptide is Methionine--tRNA ligase (Vibrio campbellii (strain ATCC BAA-1116)).